We begin with the raw amino-acid sequence, 213 residues long: 3-oxoadipate CoA-transferase subunit B (213 aa).

Glu-50 is an active-site residue.

The protein belongs to the 3-oxoacid CoA-transferase subunit B family. Heterodimer.

It carries out the reaction 3-oxoadipate + succinyl-CoA = 3-oxoadipyl-CoA + succinate. Its pathway is aromatic compound metabolism; beta-ketoadipate pathway; acetyl-CoA and succinyl-CoA from 3-oxoadipate: step 1/2. This is 3-oxoadipate CoA-transferase subunit B (pcaJ) from Pseudomonas putida (strain ATCC 47054 / DSM 6125 / CFBP 8728 / NCIMB 11950 / KT2440).